Consider the following 814-residue polypeptide: Telomere repeats-binding bouquet formation protein 1 (814 aa).

2 ARM repeats span residues 93 to 136 and 327 to 368; these read EMFR…KTSR and GGLP…GMST. Disordered stretches follow at residues 461–521, 551–584, and 653–753; these read DQDS…ELKR, STPT…LSDD, and FRRS…KRQN. Residues 488-512 are a coiled coil; that stretch reads EKSKKRKHKQKRENERSDNQETRRE. Composition is skewed to basic and acidic residues over residues 499–521, 565–577, and 679–688; these read RENE…ELKR, IFRH…RNQR, and EHSTSAQEHK. Basic residues predominate over residues 689 to 699; sequence QKSKREKHKLS. The span at 714–741 shows a compositional bias: basic and acidic residues; sequence RPRETYSPDVKQWTDHRHLKKSSEDARS. The region spanning 746–799 is the Myb-like domain; that stretch reads GRHRKRQNWSDKELCYLTKGVKRFGHSWNTILWKYPFHPGRTNVDLAKKFYHMQ.

It belongs to the TERB1 family. In terms of assembly, component of the MAJIN-TERB1-TERB2 complex.

The protein localises to the chromosome. It is found in the telomere. It localises to the nucleus inner membrane. Meiosis-specific telomere-associated protein involved in meiotic telomere attachment to the nucleus inner membrane, a crucial step for homologous pairing and synapsis. Component of the MAJIN-TERB1-TERB2 complex, which promotes telomere cap exchange by mediating attachment of telomeric DNA to the inner nuclear membrane and replacement of the protective cap of telomeric chromosomes: in early meiosis, the MAJIN-TERB1-TERB2 complex associates with telomeric DNA and the shelterin/telosome complex. During prophase, the complex matures and promotes release of the shelterin/telosome complex from telomeric DNA. In the MAJIN-TERB1-TERB2 complex, TERB1 probably mediates association with the shelterin/telosome complex. The sequence is that of Telomere repeats-binding bouquet formation protein 1 (ccdc79) from Danio rerio (Zebrafish).